The following is a 223-amino-acid chain: UPF0441 protein YgiB (223 aa).

The interval 201–223 is disordered; it reads ESVAKQSAMQRSAAGTSTRSMGG. Residues 204–223 show a composition bias toward polar residues; it reads AKQSAMQRSAAGTSTRSMGG.

This sequence belongs to the UPF0441 family.

The chain is UPF0441 protein YgiB from Salmonella arizonae (strain ATCC BAA-731 / CDC346-86 / RSK2980).